A 146-amino-acid polypeptide reads, in one-letter code: U-scoloptoxin(16)-Er1a (146 aa).

The signal sequence occupies residues 1 to 26 (MNTVSVVQFLAVGCAVFVLYGRGVFA).

It belongs to the scoloptoxin-16 family. Post-translationally, contains 4 disulfide bonds. Expressed by the venom gland.

It localises to the secreted. The sequence is that of U-scoloptoxin(16)-Er1a from Ethmostigmus rubripes (Giant centipede).